The sequence spans 65 residues: Defensin-B2 (65 aa).

A signal peptide spans 1–23 (MEARVLLLCAVLFLLVHTPPAAG). 3 disulfides stabilise this stretch: Cys29–Cys56, Cys36–Cys50, and Cys40–Cys57.

This sequence belongs to the beta-defensin family. As to expression, lowly expressed in spleen, and lung.

It localises to the secreted. Has antimicrobial activity. This is Defensin-B2 from Ornithorhynchus anatinus (Duckbill platypus).